The primary structure comprises 514 residues: Bifunctional purine biosynthesis protein PurH (514 aa).

One can recognise an MGS-like domain in the interval 1–146 (MARLALLSVS…KNFAHLAVLC (146 aa)).

This sequence belongs to the PurH family.

It carries out the reaction (6R)-10-formyltetrahydrofolate + 5-amino-1-(5-phospho-beta-D-ribosyl)imidazole-4-carboxamide = 5-formamido-1-(5-phospho-D-ribosyl)imidazole-4-carboxamide + (6S)-5,6,7,8-tetrahydrofolate. The enzyme catalyses IMP + H2O = 5-formamido-1-(5-phospho-D-ribosyl)imidazole-4-carboxamide. It functions in the pathway purine metabolism; IMP biosynthesis via de novo pathway; 5-formamido-1-(5-phospho-D-ribosyl)imidazole-4-carboxamide from 5-amino-1-(5-phospho-D-ribosyl)imidazole-4-carboxamide (10-formyl THF route): step 1/1. It participates in purine metabolism; IMP biosynthesis via de novo pathway; IMP from 5-formamido-1-(5-phospho-D-ribosyl)imidazole-4-carboxamide: step 1/1. In Nostoc punctiforme (strain ATCC 29133 / PCC 73102), this protein is Bifunctional purine biosynthesis protein PurH.